We begin with the raw amino-acid sequence, 437 residues long: Elongation factor 1-gamma (437 aa).

Ala-2 carries the post-translational modification N-acetylalanine. The region spanning Ala-2–Ser-87 is the GST N-terminal domain. Residues Thr-88 to Phe-216 form the GST C-terminal domain. Lys-147 and Lys-212 each carry N6-acetyllysine. The segment covering Phe-221–Ala-254 has biased composition (basic and acidic residues). Residues Phe-221–Gln-268 form a disordered region. Residue Lys-253 forms a Glycyl lysine isopeptide (Lys-Gly) (interchain with G-Cter in SUMO1) linkage. An EF-1-gamma C-terminal domain is found at Ala-276–Lys-437. Lys-285 is covalently cross-linked (Glycyl lysine isopeptide (Lys-Gly) (interchain with G-Cter in SUMO2)). Residue Lys-401 is modified to N6-acetyllysine. N6-acetyllysine; alternate is present on Lys-434. Lys-434 is modified (N6-malonyllysine; alternate).

As to quaternary structure, EF-1 is composed of four subunits: alpha, beta, delta, and gamma.

Its function is as follows. Probably plays a role in anchoring the complex to other cellular components. This is Elongation factor 1-gamma (EEF1G) from Macaca fascicularis (Crab-eating macaque).